The following is a 100-amino-acid chain: Large ribosomal subunit protein bL21 (100 aa).

This sequence belongs to the bacterial ribosomal protein bL21 family. As to quaternary structure, part of the 50S ribosomal subunit. Contacts protein L20.

In terms of biological role, this protein binds to 23S rRNA in the presence of protein L20. This is Large ribosomal subunit protein bL21 from Ureaplasma urealyticum serovar 10 (strain ATCC 33699 / Western).